Consider the following 466-residue polypeptide: Argininosuccinate lyase (466 aa).

It belongs to the lyase 1 family. Argininosuccinate lyase subfamily.

The protein resides in the cytoplasm. It carries out the reaction 2-(N(omega)-L-arginino)succinate = fumarate + L-arginine. The protein operates within amino-acid biosynthesis; L-arginine biosynthesis; L-arginine from L-ornithine and carbamoyl phosphate: step 3/3. The sequence is that of Argininosuccinate lyase from Methylocella silvestris (strain DSM 15510 / CIP 108128 / LMG 27833 / NCIMB 13906 / BL2).